Reading from the N-terminus, the 701-residue chain is Polyribonucleotide nucleotidyltransferase (701 aa).

Positions 480 and 486 each coordinate Mg(2+). The region spanning 547–606 (PKIDTIKIDVDKIKVVIGKGGETIDKIIAETGVKIDIDDEGNVSIYSSDQAAINRTKEII) is the KH domain. In terms of domain architecture, S1 motif spans 616–684 (GEVYHAKVVR…EKGRVDASMK (69 aa)). Residues 682 to 701 (SMKALIPRPPKPEKKEEKHD) form a disordered region. A compositionally biased stretch (basic and acidic residues) spans 691–701 (PKPEKKEEKHD).

This sequence belongs to the polyribonucleotide nucleotidyltransferase family. Requires Mg(2+) as cofactor.

It localises to the cytoplasm. It carries out the reaction RNA(n+1) + phosphate = RNA(n) + a ribonucleoside 5'-diphosphate. In terms of biological role, involved in mRNA degradation. Catalyzes the phosphorolysis of single-stranded polyribonucleotides processively in the 3'- to 5'-direction. In Streptococcus pyogenes serotype M12 (strain MGAS2096), this protein is Polyribonucleotide nucleotidyltransferase.